Consider the following 672-residue polypeptide: MKNVAQHDVEKQIAELREQIEKHNYAYYVLDQPSISDAEYDELMRKLMELEEQYPQYKTPDSPSQRVGGAPLEAFRKVTHRVPMLSLSNAFNEGDLRDFDRRVRQEVGDVRYVCELKIDGLAVSLRYEDGYFVQGATRGDGTTGEDITENLKTIRSLPLRLRQQVTIEVRGEAYMPRKSFEKLNEKRKMNGEELFANPRNAAAGSLRQLDPKVAASRQLDIFAYHVVNAEELGILSHSAALNYLDELGFKTNPARQVCETIDDVLSYIEQWHERRASLPYDIDGIVIKVDAFAQQKQLGATAKSPRWAIAYKFPAEEVVTQLVDIELSVGRTGVVTPTAILQPVRVAGTIVQRASLHNEDYIREKDIRLGDYVVIKKAGDIIPEVVCSLPERRTGKEEPFDMPTHCPACASELVRLDDEVALRCVNPQCPAQIREGLIHFVSRQAMNIDGLGEKVIAQLFEHRLVRSVADLYTLTKDELVALERMGEKSATNLLQAIEASKQNSLERLLFGLGIRHVGAKAAKTLAEHFETMERLQQATKEELMAIHEIGEKMADSIVTYFSKEEVKQLLERLRAYGVNMTYKGAKQTIDISSTFAGKTFVLTGTLQSMSRSEAKEKIETLGGKVTGSVSKKTDVVVVGEDAGSKLEKAKQLGITIWDEARFLQEIQQSKQV.

NAD(+) contacts are provided by residues 37–41 (DAEYD), 86–87 (SL), and Glu-115. The active-site N6-AMP-lysine intermediate is the Lys-117. NAD(+)-binding residues include Arg-138, Glu-172, Lys-288, and Lys-312. 4 residues coordinate Zn(2+): Cys-406, Cys-409, Cys-424, and Cys-429. The BRCT domain occupies 590-672 (DISSTFAGKT…LQEIQQSKQV (83 aa)).

The protein belongs to the NAD-dependent DNA ligase family. LigA subfamily. It depends on Mg(2+) as a cofactor. Mn(2+) serves as cofactor.

The catalysed reaction is NAD(+) + (deoxyribonucleotide)n-3'-hydroxyl + 5'-phospho-(deoxyribonucleotide)m = (deoxyribonucleotide)n+m + AMP + beta-nicotinamide D-nucleotide.. Its function is as follows. DNA ligase that catalyzes the formation of phosphodiester linkages between 5'-phosphoryl and 3'-hydroxyl groups in double-stranded DNA using NAD as a coenzyme and as the energy source for the reaction. It is essential for DNA replication and repair of damaged DNA. This is DNA ligase from Anoxybacillus flavithermus (strain DSM 21510 / WK1).